Here is a 264-residue protein sequence, read N- to C-terminus: 4-hydroxy-tetrahydrodipicolinate reductase (264 aa).

8–13 lines the NAD(+) pocket; it reads GPRGNM. Lysine 36 lines the NADP(+) pocket. NAD(+) is bound by residues 97-99 and 123-126; these read GTT and APNF. The active-site Proton donor/acceptor is histidine 153. Position 154 (histidine 154) interacts with (S)-2,3,4,5-tetrahydrodipicolinate. The active-site Proton donor is the lysine 157. 163 to 164 contributes to the (S)-2,3,4,5-tetrahydrodipicolinate binding site; the sequence is GT.

This sequence belongs to the DapB family.

Its subcellular location is the cytoplasm. It carries out the reaction (S)-2,3,4,5-tetrahydrodipicolinate + NAD(+) + H2O = (2S,4S)-4-hydroxy-2,3,4,5-tetrahydrodipicolinate + NADH + H(+). The catalysed reaction is (S)-2,3,4,5-tetrahydrodipicolinate + NADP(+) + H2O = (2S,4S)-4-hydroxy-2,3,4,5-tetrahydrodipicolinate + NADPH + H(+). It participates in amino-acid biosynthesis; L-lysine biosynthesis via DAP pathway; (S)-tetrahydrodipicolinate from L-aspartate: step 4/4. Its function is as follows. Catalyzes the conversion of 4-hydroxy-tetrahydrodipicolinate (HTPA) to tetrahydrodipicolinate. The sequence is that of 4-hydroxy-tetrahydrodipicolinate reductase from Shouchella clausii (strain KSM-K16) (Alkalihalobacillus clausii).